Reading from the N-terminus, the 746-residue chain is Serine/threonine-protein kinase SMU1 (746 aa).

Disordered stretches follow at residues 1–138 (MSLV…DTLH) and 155–212 (QRSH…GSRN). Low complexity-rich tracts occupy residues 15 to 54 (SSAN…SSTT) and 85 to 105 (SVSS…PSSA). 3 stretches are compositionally biased toward polar residues: residues 106–121 (LPWS…STAT), 128–138 (RSNTAGPDTLH), and 156–176 (RSHS…SSPT). The span at 194-203 (PSRDRERSRD) shows a compositional bias: basic and acidic residues. A CRIB domain is found at 237–250 (ISTPYDPVHLTHVG). Positions 301 to 451 (GGSDVWKKMG…RRETKKSTIK (151 aa)) are disordered. The segment covering 370–380 (PPSNASTSSAD) has biased composition (polar residues). Positions 414–430 (SPASRAPDAPAAVSAAS) are enriched in low complexity. Positions 472–723 (YRSLQKIGQG…ALGMLAHPFL (252 aa)) constitute a Protein kinase domain. ATP is bound by residues 478 to 486 (IGQGASGGV) and lysine 501. Aspartate 591 serves as the catalytic Proton acceptor.

It belongs to the protein kinase superfamily. STE Ser/Thr protein kinase family. STE20 subfamily.

It localises to the cytoplasm. The protein localises to the nucleus. It catalyses the reaction L-seryl-[protein] + ATP = O-phospho-L-seryl-[protein] + ADP + H(+). It carries out the reaction L-threonyl-[protein] + ATP = O-phospho-L-threonyl-[protein] + ADP + H(+). MAP4K component of the MAPK pathway required for the mating pheromone response and the regulation of cell polarity and cell cycle. Phosphorylates histone H2B to form H2BS10ph. The sequence is that of Serine/threonine-protein kinase SMU1 (SMU1) from Mycosarcoma maydis (Corn smut fungus).